Consider the following 96-residue polypeptide: Neutrophil defensin 1 (96 aa).

Positions 1-19 (MRTLVILAAILLVALQAQA) are cleaved as a signal peptide. The propeptide occupies 20–66 (EPLQARTDEATAAQEQIPTDNPEVVVSLAWDESLAPKDSVPGLRKNM). 3 cysteine pairs are disulfide-bonded: cysteine 68/cysteine 96, cysteine 70/cysteine 85, and cysteine 75/cysteine 95. Tyrosine 87 carries the post-translational modification Phosphotyrosine.

Tetramer. Dimer. Interacts with RETN. ADP-ribosylation drastically reduces cytotoxic and antibacterial activities, and enhances IL8 production.

The protein resides in the secreted. Effector molecule of the innate immune system that acts via antibiotic-like properties against a broad array of infectious agents including bacteria, fungi, and viruses or by promoting the activation and maturation of some APCs. Interacts with the essential precursor of cell wall synthesis lipid II to inhibit bacterial cell wall synthesis. Inhibits adenovirus infection via inhibition of viral disassembly at the vertex region, thereby restricting the release of internal capsid protein pVI, which is required for endosomal membrane penetration during cell entry. In addition, interaction with adenovirus capsid leads to the redirection of viral particles to TLR4 thereby promoting a NLRP3-mediated inflammasome response and interleukin 1-beta (IL-1beta) release. Induces the production of proinflammatory cytokines including type I interferon (IFN) in plasmacytoid dendritic cells (pDCs) by triggering the degradation of NFKBIA and nuclear translocation of IRF1, both of which are required for activation of pDCs. This Macaca mulatta (Rhesus macaque) protein is Neutrophil defensin 1.